We begin with the raw amino-acid sequence, 176 residues long: METQGASLSLGRWSLWLLLLGLVLPSASAQALSYREAVLRAVGQLNERSSEANLYRLLELDPAPNDEVDPGTRKPVSFTVKETVCPRTTQQPPEECDFKENGLVKQCVGTVTLDPSNDQFDINCNELQSVRFRPPIRRPPIRPPFRPPFRPPVRPPIRPPFRPPFRPPIGPFPGRR.

Positions 1-29 (METQGASLSLGRWSLWLLLLGLVLPSASA) are cleaved as a signal peptide. Gln-30 is modified (pyrrolidone carboxylic acid). Positions 30 to 130 (QALSYREAVL…DINCNELQSV (101 aa)) are excised as a propeptide. 2 cysteine pairs are disulfide-bonded: Cys-85–Cys-96 and Cys-107–Cys-124. The disordered stretch occupies residues 135-176 (PIRRPPIRPPFRPPFRPPVRPPIRPPFRPPFRPPIGPFPGRR). Pro residues predominate over residues 141 to 176 (IRPPFRPPFRPPVRPPIRPPFRPPFRPPIGPFPGRR). Pro-173 is modified (proline amide). A propeptide spans 174-176 (GRR) (removed in mature form).

Belongs to the cathelicidin family. Elastase is responsible for its maturation.

It localises to the secreted. Its function is as follows. Binds to the lipid A moiety of bacterial lipipolysaccharides (LPS), a glycolipid present in the outer membrane of all Gram-negative bacteria. Potent antimicrobial activity. In Ovis aries (Sheep), this protein is Cathelicidin-2 (CATHL2).